Here is a 414-residue protein sequence, read N- to C-terminus: Arrestin domain-containing protein 3 (414 aa).

2 short sequence motifs (PPxY motif) span residues 346–349 and 391–394; these read PPSY and PPLY. The tract at residues 393–414 is disordered; it reads LYSEIDPNPDQSSEDRPSCPSR. A compositionally biased stretch (basic and acidic residues) spans 405 to 414; the sequence is SEDRPSCPSR.

It belongs to the arrestin family. As to quaternary structure, interacts (via PPxY motifs) with NEDD4 (via WW domains). Interacts with ADRB2. Interacts with ADRB3. Interacts with HGS (via PPxY motifs). Does not bind TXN (thioredoxin). Interacts with ITCH.

The protein localises to the cytoplasm. It is found in the cell membrane. It localises to the lysosome. The protein resides in the endosome. Its subcellular location is the early endosome. Functionally, adapter protein that plays a role in regulating cell-surface expression of adrenergic receptors and probably also other G protein-coupled receptors. Plays a role in NEDD4-mediated ubiquitination and endocytosis af activated ADRB2 and subsequent ADRB2 degradation. May recruit NEDD4 to ADRB2. Alternatively, may function as adapter protein that does not play a major role in recruiting NEDD4 to ADRB2, but rather plays a role in a targeting ADRB2 to endosomes. The chain is Arrestin domain-containing protein 3 (Arrdc3) from Rattus norvegicus (Rat).